Here is a 738-residue protein sequence, read N- to C-terminus: Vesicle-fusing ATPase (738 aa).

ATP-binding positions include 507–512 (NGIINY) and 547–554 (PGCGKSSL).

The protein belongs to the AAA ATPase family. As to quaternary structure, interacts with syn7A, snpA and snpC. The cofactor is Mg(2+).

The protein resides in the cytoplasmic vesicle membrane. Its subcellular location is the endosome membrane. The enzyme catalyses ATP + H2O = ADP + phosphate + H(+). In terms of biological role, required for vesicle-mediated transport. Involved in endocytosis and endosome-endosome fusion. May be required for transport from the endoplasmic reticulum to the Golgi stack, and for the fusion of transport vesicles within the Golgi cisternae. Required for cell polarity, locomotion and chemotaxis. The polypeptide is Vesicle-fusing ATPase (nsfA) (Dictyostelium discoideum (Social amoeba)).